Consider the following 144-residue polypeptide: MANILVINGPNLNMLGKREPEHYGRQTLGDIIEELETLADDYEVRLYNFQSNAEHEIVERIQTAIDDIDFIIINPAAFTHTSVAIRDALSTVKIPFIEVHLSNIHKREAFRTHSYFSDLAEGVIAGLGPIGYQLALAAAVEKLK.

The active-site Proton acceptor is the Tyr-23. 3 residues coordinate substrate: Asn-74, His-80, and Asp-87. The active-site Proton donor is the His-100. Residues 101-102 (LS) and Arg-111 contribute to the substrate site.

This sequence belongs to the type-II 3-dehydroquinase family. Homododecamer.

It carries out the reaction 3-dehydroquinate = 3-dehydroshikimate + H2O. Its pathway is metabolic intermediate biosynthesis; chorismate biosynthesis; chorismate from D-erythrose 4-phosphate and phosphoenolpyruvate: step 3/7. Its function is as follows. Catalyzes a trans-dehydration via an enolate intermediate. This chain is 3-dehydroquinate dehydratase, found in Hydrogenovibrio crunogenus (strain DSM 25203 / XCL-2) (Thiomicrospira crunogena).